The primary structure comprises 231 residues: Large ribosomal subunit protein uL1 (231 aa).

It belongs to the universal ribosomal protein uL1 family. In terms of assembly, part of the 50S ribosomal subunit.

Functionally, binds directly to 23S rRNA. The L1 stalk is quite mobile in the ribosome, and is involved in E site tRNA release. Its function is as follows. Protein L1 is also a translational repressor protein, it controls the translation of the L11 operon by binding to its mRNA. The protein is Large ribosomal subunit protein uL1 of Gluconacetobacter diazotrophicus (strain ATCC 49037 / DSM 5601 / CCUG 37298 / CIP 103539 / LMG 7603 / PAl5).